The primary structure comprises 530 residues: Arginine--tRNA ligase (530 aa).

Positions 113 to 123 match the 'HIGH' region motif; the sequence is ANPTGPLHIGH.

It belongs to the class-I aminoacyl-tRNA synthetase family. In terms of assembly, monomer.

Its subcellular location is the cytoplasm. The enzyme catalyses tRNA(Arg) + L-arginine + ATP = L-arginyl-tRNA(Arg) + AMP + diphosphate. This chain is Arginine--tRNA ligase, found in Campylobacter jejuni subsp. jejuni serotype O:23/36 (strain 81-176).